The chain runs to 397 residues: DNA-directed RNA polymerase subunit Rpo1C (397 aa).

This sequence belongs to the RNA polymerase beta' chain family. As to quaternary structure, part of the RNA polymerase complex.

The protein resides in the cytoplasm. It catalyses the reaction RNA(n) + a ribonucleoside 5'-triphosphate = RNA(n+1) + diphosphate. DNA-dependent RNA polymerase (RNAP) catalyzes the transcription of DNA into RNA using the four ribonucleoside triphosphates as substrates. Forms part of the jaw domain. This Pyrococcus horikoshii (strain ATCC 700860 / DSM 12428 / JCM 9974 / NBRC 100139 / OT-3) protein is DNA-directed RNA polymerase subunit Rpo1C.